Reading from the N-terminus, the 740-residue chain is E3 ubiquitin-protein ligase WAV3 (740 aa).

Residues 14-105 (PRNSDAAAPD…AISNPSSPRS (92 aa)) are disordered. Residues 49 to 67 (SGGSNPSTPRSTSSPSLRC) are compositionally biased toward low complexity. The segment covering 71–90 (DAQTPTAEQTSTPRSATKSP) has biased composition (polar residues). The segment at 122 to 167 (CGICLNSVKTGQGTAKYTAECSHAFHFPCIADYVRKQGKLVCPVCN) adopts an RING-type; atypical zinc-finger fold. The region spanning 332 to 476 (DLVVVVDVGG…IPVTEHGFGE (145 aa)) is the VWFA domain. The interval 677-709 (QSQHQQQHNQRRRGSERETTTTMTLMDENGEPL) is disordered.

As to quaternary structure, interacts with SINAT1, SINAT2, SINAT3, SINAT4, SINAT5, TOR1/SPR2 and FIP2. Expressed in root tips and leaf primordia.

The enzyme catalyses S-ubiquitinyl-[E2 ubiquitin-conjugating enzyme]-L-cysteine + [acceptor protein]-L-lysine = [E2 ubiquitin-conjugating enzyme]-L-cysteine + N(6)-ubiquitinyl-[acceptor protein]-L-lysine.. E3 ubiquitin-protein ligase involved in the regulation of root growth. Acts as a positive regulator of root gravitropism. Possesses E3 protein ligase activity in vitro. This chain is E3 ubiquitin-protein ligase WAV3, found in Arabidopsis thaliana (Mouse-ear cress).